The following is a 512-amino-acid chain: 2,3-bisphosphoglycerate-independent phosphoglycerate mutase (512 aa).

Residues D12 and S62 each contribute to the Mn(2+) site. The Phosphoserine intermediate role is filled by S62. Residues H123, 153–154 (RD), R185, R191, 260–263 (RPDR), and K333 contribute to the substrate site. 5 residues coordinate Mn(2+): D400, H404, D441, H442, and H460.

This sequence belongs to the BPG-independent phosphoglycerate mutase family. In terms of assembly, monomer. Requires Mn(2+) as cofactor.

It carries out the reaction (2R)-2-phosphoglycerate = (2R)-3-phosphoglycerate. Its pathway is carbohydrate degradation; glycolysis; pyruvate from D-glyceraldehyde 3-phosphate: step 3/5. In terms of biological role, catalyzes the interconversion of 2-phosphoglycerate and 3-phosphoglycerate. This chain is 2,3-bisphosphoglycerate-independent phosphoglycerate mutase, found in Clostridium perfringens (strain SM101 / Type A).